A 1065-amino-acid polypeptide reads, in one-letter code: Carbamoyl phosphate synthase large chain (1065 aa).

Residues 1-401 (MPKRRDIETI…SLLKAVRSLE (401 aa)) are carboxyphosphate synthetic domain. Residues R129, R169, G175, G176, R208, I210, E215, G241, I242, H243, Q284, and E298 each coordinate ATP. The ATP-grasp 1 domain occupies 133–327 (RALMNELGEP…IAKLAAKIAV (195 aa)). 3 residues coordinate Mg(2+): Q284, E298, and N300. The Mn(2+) site is built by Q284, E298, and N300. Positions 402–546 (IGVHHLELNE…YSTYEEENES (145 aa)) are oligomerization domain. The segment at 547–929 (IVTEKPSVIV…ALYKGLVASG (383 aa)) is carbamoyl phosphate synthetic domain. The region spanning 671–861 (EQALSELGIP…MANLATKAIL (191 aa)) is the ATP-grasp 2 domain. Residues R707, R746, I748, E752, G777, V778, H779, S780, Q820, and E832 each contribute to the ATP site. The Mg(2+) site is built by Q820, E832, and N834. Mn(2+) is bound by residues Q820, E832, and N834. The region spanning 930–1065 (IHIQPHGAVL…TAMTEGLVRS (136 aa)) is the MGS-like domain. An allosteric domain region spans residues 930–1065 (IHIQPHGAVL…TAMTEGLVRS (136 aa)).

Belongs to the CarB family. As to quaternary structure, composed of two chains; the small (or glutamine) chain promotes the hydrolysis of glutamine to ammonia, which is used by the large (or ammonia) chain to synthesize carbamoyl phosphate. Tetramer of heterodimers (alpha,beta)4. Requires Mg(2+) as cofactor. Mn(2+) is required as a cofactor.

It catalyses the reaction hydrogencarbonate + L-glutamine + 2 ATP + H2O = carbamoyl phosphate + L-glutamate + 2 ADP + phosphate + 2 H(+). The catalysed reaction is hydrogencarbonate + NH4(+) + 2 ATP = carbamoyl phosphate + 2 ADP + phosphate + 2 H(+). The protein operates within amino-acid biosynthesis; L-arginine biosynthesis; carbamoyl phosphate from bicarbonate: step 1/1. Its pathway is pyrimidine metabolism; UMP biosynthesis via de novo pathway; (S)-dihydroorotate from bicarbonate: step 1/3. Functionally, large subunit of the glutamine-dependent carbamoyl phosphate synthetase (CPSase). CPSase catalyzes the formation of carbamoyl phosphate from the ammonia moiety of glutamine, carbonate, and phosphate donated by ATP, constituting the first step of 2 biosynthetic pathways, one leading to arginine and/or urea and the other to pyrimidine nucleotides. The large subunit (synthetase) binds the substrates ammonia (free or transferred from glutamine from the small subunit), hydrogencarbonate and ATP and carries out an ATP-coupled ligase reaction, activating hydrogencarbonate by forming carboxy phosphate which reacts with ammonia to form carbamoyl phosphate. The protein is Carbamoyl phosphate synthase large chain of Bacillus caldolyticus.